The chain runs to 58 residues: Large ribosomal subunit protein uL30 (58 aa).

The protein belongs to the universal ribosomal protein uL30 family. In terms of assembly, part of the 50S ribosomal subunit.

This chain is Large ribosomal subunit protein uL30, found in Psychromonas ingrahamii (strain DSM 17664 / CCUG 51855 / 37).